Reading from the N-terminus, the 395-residue chain is MAQLETRTEPMVVNFGPHHPSMHGVLRLVVTLDGENVIDCEPVIGYLHRGMEKIAENRTNVMYVPYVSRMDYAAGMFYEAIVVNAPERLANIPVPKRASYIRVLMLELNRIANHLLWLGPFLADVGAQTPFFYIFREREMIYDLWEAATGQRLINNNFFRIGGVACDLPYGWLEKCIDFCDWFGPKIDEYEKLITNNPIFRKRIEGLGTIQRDQAINWSLSGPMLRASGVSWDLRKVDSYECYDDFDWQIASEKEGDCYARYRVRVEEMRQSLSIIRQACKMIPGGPTENLEAQRMSTEDKKSEIFGIDYQYVAKKVAPTFKIPNGELYTRLESGKGEIGVFIQGNNEVTPWRFKIRAADLNNLQILPHILKGAKIADIMAILGSIDVIMGSVDR.

It belongs to the complex I 49 kDa subunit family. As to quaternary structure, NDH-1 can be composed of about 15 different subunits; different subcomplexes with different compositions have been identified which probably have different functions.

It localises to the cellular thylakoid membrane. The catalysed reaction is a plastoquinone + NADH + (n+1) H(+)(in) = a plastoquinol + NAD(+) + n H(+)(out). It catalyses the reaction a plastoquinone + NADPH + (n+1) H(+)(in) = a plastoquinol + NADP(+) + n H(+)(out). NDH-1 shuttles electrons from an unknown electron donor, via FMN and iron-sulfur (Fe-S) centers, to quinones in the respiratory and/or the photosynthetic chain. The immediate electron acceptor for the enzyme in this species is believed to be plastoquinone. Couples the redox reaction to proton translocation, and thus conserves the redox energy in a proton gradient. Cyanobacterial NDH-1 also plays a role in inorganic carbon-concentration. In Prochlorococcus marinus (strain MIT 9301), this protein is NAD(P)H-quinone oxidoreductase subunit H.